The sequence spans 459 residues: Nuclear distribution protein PAC1-2 (459 aa).

Residues 56 to 83 (TSIVRLQKKIMDLESRNAALQTELANLT) are a coiled coil. WD repeat units follow at residues 108 to 149 (SHRD…RTVK), 151 to 191 (HTRA…KNIR), 195 to 244 (GHDH…KTLR), 246 to 284 (HTAW…SDHK), 306 to 348 (QYLA…LGTL), 350 to 389 (GHDN…KCVK), 394 to 438 (AHER…DTPD), and 440 to 459 (QVRC…VFAD).

It belongs to the WD repeat LIS1/nudF family. As to quaternary structure, self-associates. Interacts with NDL1 and dynein.

The protein resides in the cytoplasm. Its subcellular location is the cytoskeleton. It is found in the spindle pole. In terms of biological role, positively regulates the activity of the minus-end directed microtubule motor protein dynein. May enhance dynein-mediated microtubule sliding by targeting dynein to the microtubule plus end. Required for nuclear migration during vegetative growth as well as development. Required for retrograde early endosome (EE) transport from the hyphal tip. Required for localization of dynein to the mitotic spindle poles. Recruits additional proteins to the dynein complex at SPBs. This chain is Nuclear distribution protein PAC1-2, found in Uncinocarpus reesii (strain UAMH 1704).